A 212-amino-acid polypeptide reads, in one-letter code: Casparian strip membrane protein 1 (212 aa).

The disordered stretch occupies residues 1–28 (MDSSNSTKETGDIPIPVTSSKSSKAAPP). Residues 1 to 49 (MDSSNSTKETGDIPIPVTSSKSSKAAPPPVVAAKAKSTTKQPLVSGWKR) are Cytoplasmic-facing. A compositionally biased stretch (low complexity) spans 16–28 (PVTSSKSSKAAPP). Residues 50 to 70 (GLGIIDFILRICAIAAALAAA) form a helical membrane-spanning segment. The Extracellular portion of the chain corresponds to 71–100 (TAMGTTSQQLPFFTQFFQFKADYNDLPAFT). Residues 101–121 (FFVIANAMAGAYLVLSLPFSI) form a helical membrane-spanning segment. At 122–133 (LCIVRPHILGAR) the chain is on the cytoplasmic side. The chain crosses the membrane as a helical span at residues 134 to 154 (LMLLVFDTVAVPLVTAAASAA). The Extracellular portion of the chain corresponds to 155 to 186 (ASIVYLAHNGNSDANWVAICRQFNDFCQRVSG). A helical membrane pass occupies residues 187–207 (AVVASFITALLFVVLVAVSAV). Residues 208–212 (ALRQK) lie on the Cytoplasmic side of the membrane.

It belongs to the Casparian strip membrane proteins (CASP) family. Homodimer and heterodimers.

It localises to the cell membrane. Its function is as follows. Regulates membrane-cell wall junctions and localized cell wall deposition. Required for establishment of the Casparian strip membrane domain (CSD) and the subsequent formation of Casparian strips, a cell wall modification of the root endodermis that determines an apoplastic barrier between the intraorganismal apoplasm and the extraorganismal apoplasm and prevents lateral diffusion. This chain is Casparian strip membrane protein 1, found in Helianthus annuus (Common sunflower).